Reading from the N-terminus, the 1628-residue chain is Centrosomal protein of 170 kDa protein B (1628 aa).

One can recognise an FHA domain in the interval 23–73 (IFVGREDCELMLQSRSVDKQHAVINYDSDKDEHRVKDLGSLNGTFVNDVRI). Disordered regions lie at residues 136-201 (EHGA…DMTQ), 329-369 (LIRR…SEDP), 415-504 (PRKK…GKNY), 566-586 (SDVRTGKVKNEEEDNLSDAGT), 637-659 (LASEPSVPHKPIMSSTPPVKLSN), 719-739 (EHQGEADPTVPSRTRRLLPQL), 758-842 (ESQR…KKST), 1005-1084 (VSLV…LDFT), 1100-1341 (TVSS…EDEQ), 1379-1405 (AGDGDSQSSSGTGQSTSISSVPNTPAS), 1443-1463 (GSTGLEDFDQNMNDSREDPSK), and 1560-1628 (HLDV…TYIV). 2 stretches are compositionally biased toward basic and acidic residues: residues 147–156 (KQDKADKKAT) and 180–201 (KLDKEGRRQDEHYSERPNDMTQ). Positions 421–434 (QSFTHNANSPQNDT) are enriched in polar residues. A compositionally biased stretch (basic and acidic residues) spans 436–453 (PVLKAKAEKRKGTLHVEK). Polar residues predominate over residues 454 to 479 (VSTNGMGSTAPASKSLSSPSFPQRSN). Over residues 481 to 490 (FRREKTEDRI) the composition is skewed to basic and acidic residues. Basic and acidic residues-rich tracts occupy residues 758–773 (ESQRKSLEEPEKRISE) and 817–828 (WKGEESHSREPS). Residues 1005-1023 (VSLVSDKNVPSHSQKNRIV) are compositionally biased toward polar residues. Positions 1045-1056 (ARERLSEKRRTV) are enriched in basic and acidic residues. Polar residues predominate over residues 1129 to 1150 (RSSNAQKVQQALTRSNSLSTPR). The span at 1176–1193 (SNISPGTSSANSSSAKSS) shows a compositional bias: low complexity. Polar residues predominate over residues 1216–1227 (NVPSDSETTSSV). 3 stretches are compositionally biased toward low complexity: residues 1261–1280 (TQKQTPRPRSSSVKYSSSST), 1312–1328 (ASTATQTSRSSSVSRRQ), and 1381–1398 (DGDSQSSSGTGQSTSISS). A compositionally biased stretch (polar residues) spans 1564–1596 (PSSNKKTSSTILTSNPLSRTTNNSAARTESQTP). Over residues 1606–1618 (SSSSSSRSPGSSF) the composition is skewed to low complexity.

It belongs to the CEP170 family.

It localises to the cytoplasm. The protein localises to the cytoskeleton. Functionally, plays a role in microtubule organization. The polypeptide is Centrosomal protein of 170 kDa protein B (cep170b) (Xenopus tropicalis (Western clawed frog)).